The following is a 143-amino-acid chain: Large ribosomal subunit protein uL16c (143 aa).

Belongs to the universal ribosomal protein uL16 family. In terms of assembly, part of the 50S ribosomal subunit.

It is found in the plastid. The protein localises to the chloroplast. This Chlorokybus atmophyticus (Soil alga) protein is Large ribosomal subunit protein uL16c.